Here is a 60-residue protein sequence, read N- to C-terminus: Large ribosomal subunit protein bL32 (60 aa).

A disordered region spans residues 1 to 22 (MAVPARHTSKAKKNKRRTHYKL). Residues 7-20 (HTSKAKKNKRRTHY) are compositionally biased toward basic residues.

Belongs to the bacterial ribosomal protein bL32 family.

This is Large ribosomal subunit protein bL32 from Streptococcus pyogenes serotype M3 (strain ATCC BAA-595 / MGAS315).